Here is a 316-residue protein sequence, read N- to C-terminus: DNA-directed RNA polymerase subunit alpha (316 aa).

Residues 1–230 (MIEFEKPNIH…EHLAMFVDLT (230 aa)) are alpha N-terminal domain (alpha-NTD). The alpha C-terminal domain (alpha-CTD) stretch occupies residues 247–316 (KEKMLEMTIE…DLGLSLRKED (70 aa)).

It belongs to the RNA polymerase alpha chain family. As to quaternary structure, homodimer. The RNAP catalytic core consists of 2 alpha, 1 beta, 1 beta' and 1 omega subunit. When a sigma factor is associated with the core the holoenzyme is formed, which can initiate transcription.

The catalysed reaction is RNA(n) + a ribonucleoside 5'-triphosphate = RNA(n+1) + diphosphate. In terms of biological role, DNA-dependent RNA polymerase catalyzes the transcription of DNA into RNA using the four ribonucleoside triphosphates as substrates. This Levilactobacillus brevis (strain ATCC 367 / BCRC 12310 / CIP 105137 / JCM 1170 / LMG 11437 / NCIMB 947 / NCTC 947) (Lactobacillus brevis) protein is DNA-directed RNA polymerase subunit alpha.